A 143-amino-acid chain; its full sequence is Transcriptional regulator MraZ (143 aa).

2 SpoVT-AbrB domains span residues 5–47 and 76–119; these read EYQH…PMHE and ATEC…SKVI.

Belongs to the MraZ family. Forms oligomers.

Its subcellular location is the cytoplasm. The protein resides in the nucleoid. The protein is Transcriptional regulator MraZ of Bacillus subtilis (strain 168).